Reading from the N-terminus, the 404-residue chain is Cysteine desulfurase IscS (404 aa).

Pyridoxal 5'-phosphate is bound by residues 75–76, Asn155, Gln183, and 203–205; these read AT and SAH. Lys206 is modified (N6-(pyridoxal phosphate)lysine). Thr243 is a pyridoxal 5'-phosphate binding site. Residue Cys328 is the Cysteine persulfide intermediate of the active site. Position 328 (Cys328) interacts with [2Fe-2S] cluster.

It belongs to the class-V pyridoxal-phosphate-dependent aminotransferase family. NifS/IscS subfamily. In terms of assembly, homodimer. Forms a heterotetramer with IscU, interacts with other sulfur acceptors. Requires pyridoxal 5'-phosphate as cofactor.

The protein resides in the cytoplasm. It carries out the reaction (sulfur carrier)-H + L-cysteine = (sulfur carrier)-SH + L-alanine. It functions in the pathway cofactor biosynthesis; iron-sulfur cluster biosynthesis. In terms of biological role, master enzyme that delivers sulfur to a number of partners involved in Fe-S cluster assembly, tRNA modification or cofactor biosynthesis. Catalyzes the removal of elemental sulfur atoms from cysteine to produce alanine. Functions as a sulfur delivery protein for Fe-S cluster synthesis onto IscU, an Fe-S scaffold assembly protein, as well as other S acceptor proteins. This Pseudomonas putida (strain W619) protein is Cysteine desulfurase IscS.